The chain runs to 156 residues: Small ribosomal subunit protein uS7 (156 aa).

This sequence belongs to the universal ribosomal protein uS7 family. As to quaternary structure, part of the 30S ribosomal subunit. Contacts proteins S9 and S11.

In terms of biological role, one of the primary rRNA binding proteins, it binds directly to 16S rRNA where it nucleates assembly of the head domain of the 30S subunit. Is located at the subunit interface close to the decoding center, probably blocks exit of the E-site tRNA. The chain is Small ribosomal subunit protein uS7 from Onion yellows phytoplasma (strain OY-M).